Consider the following 350-residue polypeptide: GTPase Obg (350 aa).

The Obg domain maps to 1 to 159; that stretch reads MKFLDQAKIY…RWIWLRLKLI (159 aa). Residues 160-328 enclose the OBG-type G domain; that stretch reads ADVGLVGLPN…VLRLLQDRVT (169 aa). GTP-binding positions include 166 to 173, 191 to 195, 213 to 216, 280 to 283, and 309 to 311; these read GLPNAGKS, FTTLH, DIPG, NKID, and SGV. Mg(2+)-binding residues include Ser-173 and Thr-193. Residues 331 to 350 are disordered; the sequence is REAARDAAPPQAAAGREETA.

The protein belongs to the TRAFAC class OBG-HflX-like GTPase superfamily. OBG GTPase family. As to quaternary structure, monomer. Mg(2+) is required as a cofactor.

The protein resides in the cytoplasm. An essential GTPase which binds GTP, GDP and possibly (p)ppGpp with moderate affinity, with high nucleotide exchange rates and a fairly low GTP hydrolysis rate. Plays a role in control of the cell cycle, stress response, ribosome biogenesis and in those bacteria that undergo differentiation, in morphogenesis control. This chain is GTPase Obg, found in Gluconacetobacter diazotrophicus (strain ATCC 49037 / DSM 5601 / CCUG 37298 / CIP 103539 / LMG 7603 / PAl5).